The primary structure comprises 145 residues: UPF0763 protein CFF8240_1572 (145 aa).

Belongs to the UPF0763 family.

The polypeptide is UPF0763 protein CFF8240_1572 (Campylobacter fetus subsp. fetus (strain 82-40)).